The sequence spans 530 residues: Calcium-dependent protein kinase 14 (530 aa).

Residue Gly-2 is the site of N-myristoyl glycine attachment. Residues 54–312 (YKLGRELGRG…AQQVLDHPWI (259 aa)) form the Protein kinase domain. ATP-binding positions include 60–68 (LGRGEFGVT) and Lys-83. The Proton acceptor role is filled by Asp-178. The residue at position 218 (Ser-218) is a Phosphoserine. An autoinhibitory domain region spans residues 318 to 348 (ASNVSLGETVRARLKQFSVMNKLKKRALRVI). EF-hand domains are found at residues 355–390 (EETS…LGIV), 391–426 (VPQD…IRKL), 427–462 (GNDE…DVDT), and 463–498 (TSEE…GTDW). Ca(2+) is bound by residues Asp-368, Ser-370, Lys-374, Glu-379, Asp-404, Asp-406, Asp-408, Tyr-410, Glu-415, Asp-440, Asn-442, Ser-444, Tyr-446, Glu-451, Asp-476, Asn-478, Asp-480, and Lys-482. Ser-484 carries the phosphoserine modification. Ca(2+) is bound at residue Glu-487.

Belongs to the protein kinase superfamily. Ser/Thr protein kinase family. CDPK subfamily.

Its subcellular location is the membrane. It catalyses the reaction L-seryl-[protein] + ATP = O-phospho-L-seryl-[protein] + ADP + H(+). The enzyme catalyses L-threonyl-[protein] + ATP = O-phospho-L-threonyl-[protein] + ADP + H(+). With respect to regulation, activated by calcium. Autophosphorylation may play an important role in the regulation of the kinase activity. May play a role in signal transduction pathways that involve calcium as a second messenger. The polypeptide is Calcium-dependent protein kinase 14 (CPK14) (Arabidopsis thaliana (Mouse-ear cress)).